A 63-amino-acid chain; its full sequence is Sec-independent protein translocase protein TatA (63 aa).

The helical transmembrane segment at 1-21 (MGSFSMWHWLIVLVIVLLLFG) threads the bilayer. A disordered region spans residues 42-63 (GMTDEDAPDTAKTVDHKADETK). Positions 53-63 (KTVDHKADETK) are enriched in basic and acidic residues.

It belongs to the TatA/E family. In terms of assembly, the Tat system comprises two distinct complexes: a TatABC complex, containing multiple copies of TatA, TatB and TatC subunits, and a separate TatA complex, containing only TatA subunits. Substrates initially bind to the TatABC complex, which probably triggers association of the separate TatA complex to form the active translocon.

Its subcellular location is the cell inner membrane. In terms of biological role, part of the twin-arginine translocation (Tat) system that transports large folded proteins containing a characteristic twin-arginine motif in their signal peptide across membranes. TatA could form the protein-conducting channel of the Tat system. This chain is Sec-independent protein translocase protein TatA, found in Rhizobium leguminosarum bv. trifolii (strain WSM2304).